Reading from the N-terminus, the 131-residue chain is MAKGSKRVVRKRAEKKNIANGIAHIQATFNNTIVTITDIAGNVISWSTCGTMNFKGSRKSTPFAAQIAAEDAAKKAMEHGLRSVEVRVKGPGSGRESALRALSSAGLNISVIKDVTPIPHNGCRPPKRRRV.

This sequence belongs to the universal ribosomal protein uS11 family. As to quaternary structure, part of the 30S ribosomal subunit. Interacts with proteins S7 and S18. Binds to IF-3.

In terms of biological role, located on the platform of the 30S subunit, it bridges several disparate RNA helices of the 16S rRNA. Forms part of the Shine-Dalgarno cleft in the 70S ribosome. The protein is Small ribosomal subunit protein uS11 of Syntrophotalea carbinolica (strain DSM 2380 / NBRC 103641 / GraBd1) (Pelobacter carbinolicus).